The primary structure comprises 719 residues: Putative RNA-binding protein involved in heterochromatin assembly (719 aa).

The 97-residue stretch at 226–322 folds into the RRM domain; the sequence is KILYMNNLPP…NLANTKQPRV (97 aa). Ser-345 is modified (phosphoserine). The RanBP2-type 1 zinc-finger motif lies at 355 to 384; sequence RPGDWNCPSCGFSNFQRRTACFRCSFPAPS. The disordered stretch occupies residues 389-415; the sequence is HTANSNNNVNSSRNNLNNRVNSGSSSN. Residues 392-415 are compositionally biased toward low complexity; the sequence is NSNNNVNSSRNNLNNRVNSGSSSN. Position 455 is a phosphoserine (Ser-455). The interval 511–561 is disordered; the sequence is NNNINGNGNGNGNNSNNNNNHNNNHNNNHHNGSINSNSNTNNNNNNNNGNN. The RanBP2-type 2 zinc finger occupies 581–610; the sequence is RAGDWKCSTCTYHNFAKNVVCLRCGGPKSI. Residues 622–649 are compositionally biased toward polar residues; the sequence is DSSTFGPASRTPSNNNISVNTNGGSNAG. The interval 622-661 is disordered; it reads DSSTFGPASRTPSNNNISVNTNGGSNAGRTDGNDNKGRDI. Residue Ser-630 is modified to Phosphoserine. Basic and acidic residues predominate over residues 652–661; the sequence is DGNDNKGRDI.

The protein resides in the chromosome. It is found in the nucleus. In terms of biological role, may play a role in chromatin organization. This Saccharomyces cerevisiae (strain ATCC 204508 / S288c) (Baker's yeast) protein is Putative RNA-binding protein involved in heterochromatin assembly.